The chain runs to 141 residues: Hemoglobin subunit alpha-3 (141 aa).

A Globin domain is found at 1-141 (VLSPADKTNV…VSTVLTSKYR (141 aa)). O2 is bound at residue His-58. Position 87 (His-87) interacts with heme b.

This sequence belongs to the globin family. In terms of assembly, heterotetramer of two alpha chains and two beta chains. Red blood cells.

Involved in oxygen transport from the lung to the various peripheral tissues. The chain is Hemoglobin subunit alpha-3 from Pan troglodytes (Chimpanzee).